Here is a 447-residue protein sequence, read N- to C-terminus: N-succinylarginine dihydrolase (447 aa).

Substrate contacts are provided by residues A19 to S28, N110, and H137 to R138. E174 is an active-site residue. R212 serves as a coordination point for substrate. The active site involves H248. The substrate site is built by D250 and N359. The active-site Nucleophile is the C365.

This sequence belongs to the succinylarginine dihydrolase family. In terms of assembly, homodimer.

It carries out the reaction N(2)-succinyl-L-arginine + 2 H2O + 2 H(+) = N(2)-succinyl-L-ornithine + 2 NH4(+) + CO2. Its pathway is amino-acid degradation; L-arginine degradation via AST pathway; L-glutamate and succinate from L-arginine: step 2/5. Its function is as follows. Catalyzes the hydrolysis of N(2)-succinylarginine into N(2)-succinylornithine, ammonia and CO(2). This is N-succinylarginine dihydrolase from Salmonella arizonae (strain ATCC BAA-731 / CDC346-86 / RSK2980).